A 378-amino-acid polypeptide reads, in one-letter code: Erythronate-4-phosphate dehydrogenase (378 aa).

Substrate-binding residues include S45 and T66. NAD(+) contacts are provided by D146 and T175. R208 is a catalytic residue. D232 is an NAD(+) binding site. The active site involves E237. Residue H254 is the Proton donor of the active site. G257 lines the NAD(+) pocket. Position 258 (Y258) interacts with substrate.

This sequence belongs to the D-isomer specific 2-hydroxyacid dehydrogenase family. PdxB subfamily. In terms of assembly, homodimer.

Its subcellular location is the cytoplasm. The catalysed reaction is 4-phospho-D-erythronate + NAD(+) = (R)-3-hydroxy-2-oxo-4-phosphooxybutanoate + NADH + H(+). It functions in the pathway cofactor biosynthesis; pyridoxine 5'-phosphate biosynthesis; pyridoxine 5'-phosphate from D-erythrose 4-phosphate: step 2/5. Its function is as follows. Catalyzes the oxidation of erythronate-4-phosphate to 3-hydroxy-2-oxo-4-phosphonooxybutanoate. This chain is Erythronate-4-phosphate dehydrogenase, found in Pectobacterium carotovorum subsp. carotovorum (strain PC1).